The primary structure comprises 236 residues: Probable calcium-binding protein CML30 (236 aa).

The tract at residues 43-64 (VVVVAKKRPEEEPRRPDPDADL) is disordered. Residues 49–60 (KRPEEEPRRPDP) are compositionally biased toward basic and acidic residues. 2 consecutive EF-hand domains span residues 59–94 (DPDADLGIVFSTFDHDGDGFITAAELEESLKRLGIA) and 96–131 (SSAAEAAALVARVDANSDGLIDIHEFRELYDSIPKR). Ca(2+)-binding residues include D72, D74, D76, E83, D109, N111, D113, and E120. The tract at residues 130–158 (KRRKSHQQHPLPSTAAADEEAAAADEEYE) is disordered. The span at 146–158 (ADEEAAAADEEYE) shows a compositional bias: acidic residues. 2 EF-hand domains span residues 161–196 (EEERDLREAFDVFDGNKDGLISAEELGTVLESLGLR) and 202–236 (PAVAECRDMIRLVDSDGDGMVSFEEFKRMMTVVKA). The Ca(2+) site is built by D174, N176, D178, E185, D215, D217, D219, M221, and E226.

Functionally, potential calcium sensor. The chain is Probable calcium-binding protein CML30 (CML30) from Oryza sativa subsp. japonica (Rice).